We begin with the raw amino-acid sequence, 209 residues long: Thiamine-phosphate synthase 1 (209 aa).

Residues 39 to 43 and asparagine 74 contribute to the 4-amino-2-methyl-5-(diphosphooxymethyl)pyrimidine site; that span reads QFREK. Mg(2+) is bound by residues aspartate 75 and aspartate 94. Serine 112 is a binding site for 4-amino-2-methyl-5-(diphosphooxymethyl)pyrimidine. 138-140 serves as a coordination point for 2-[(2R,5Z)-2-carboxy-4-methylthiazol-5(2H)-ylidene]ethyl phosphate; the sequence is TQS. Residue lysine 141 participates in 4-amino-2-methyl-5-(diphosphooxymethyl)pyrimidine binding. 2-[(2R,5Z)-2-carboxy-4-methylthiazol-5(2H)-ylidene]ethyl phosphate-binding positions include glycine 170 and 190 to 191; that span reads IS.

This sequence belongs to the thiamine-phosphate synthase family. The cofactor is Mg(2+).

The enzyme catalyses 2-[(2R,5Z)-2-carboxy-4-methylthiazol-5(2H)-ylidene]ethyl phosphate + 4-amino-2-methyl-5-(diphosphooxymethyl)pyrimidine + 2 H(+) = thiamine phosphate + CO2 + diphosphate. It catalyses the reaction 2-(2-carboxy-4-methylthiazol-5-yl)ethyl phosphate + 4-amino-2-methyl-5-(diphosphooxymethyl)pyrimidine + 2 H(+) = thiamine phosphate + CO2 + diphosphate. The catalysed reaction is 4-methyl-5-(2-phosphooxyethyl)-thiazole + 4-amino-2-methyl-5-(diphosphooxymethyl)pyrimidine + H(+) = thiamine phosphate + diphosphate. The protein operates within cofactor biosynthesis; thiamine diphosphate biosynthesis; thiamine phosphate from 4-amino-2-methyl-5-diphosphomethylpyrimidine and 4-methyl-5-(2-phosphoethyl)-thiazole: step 1/1. Its function is as follows. Condenses 4-methyl-5-(beta-hydroxyethyl)thiazole monophosphate (THZ-P) and 2-methyl-4-amino-5-hydroxymethyl pyrimidine pyrophosphate (HMP-PP) to form thiamine monophosphate (TMP). The chain is Thiamine-phosphate synthase 1 from Streptococcus pneumoniae serotype 4 (strain ATCC BAA-334 / TIGR4).